The following is a 187-amino-acid chain: Elongation factor P (187 aa).

This sequence belongs to the elongation factor P family.

It localises to the cytoplasm. It functions in the pathway protein biosynthesis; polypeptide chain elongation. Involved in peptide bond synthesis. Stimulates efficient translation and peptide-bond synthesis on native or reconstituted 70S ribosomes in vitro. Probably functions indirectly by altering the affinity of the ribosome for aminoacyl-tRNA, thus increasing their reactivity as acceptors for peptidyl transferase. This Parafrankia sp. (strain EAN1pec) protein is Elongation factor P.